Consider the following 357-residue polypeptide: tRNA-specific 2-thiouridylase MnmA (357 aa).

Residues 11–18 (AMSGGVDS) and leucine 37 contribute to the ATP site. Cysteine 102 serves as the catalytic Nucleophile. The cysteines at positions 102 and 197 are disulfide-linked. Glycine 126 serves as a coordination point for ATP. The tract at residues 148–150 (KDQ) is interaction with tRNA. Cysteine 197 functions as the Cysteine persulfide intermediate in the catalytic mechanism. Positions 301–302 (RY) are interaction with tRNA.

It belongs to the MnmA/TRMU family.

The protein localises to the cytoplasm. The enzyme catalyses S-sulfanyl-L-cysteinyl-[protein] + uridine(34) in tRNA + AH2 + ATP = 2-thiouridine(34) in tRNA + L-cysteinyl-[protein] + A + AMP + diphosphate + H(+). Functionally, catalyzes the 2-thiolation of uridine at the wobble position (U34) of tRNA, leading to the formation of s(2)U34. The chain is tRNA-specific 2-thiouridylase MnmA from Dehalococcoides mccartyi (strain ATCC BAA-2266 / KCTC 15142 / 195) (Dehalococcoides ethenogenes (strain 195)).